A 134-amino-acid chain; its full sequence is Profilin-4 (134 aa).

The cysteines at positions 13 and 118 are disulfide-linked. The short motif at 84-100 is the Involved in PIP2 interaction element; that stretch reads AVIRGKKGSGGITIKKT. Thr-114 is subject to Phosphothreonine.

It belongs to the profilin family. Occurs in many kinds of cells as a complex with monomeric actin in a 1:1 ratio. In terms of processing, phosphorylated by MAP kinases.

Its subcellular location is the cytoplasm. The protein localises to the cytoskeleton. Its function is as follows. Binds to actin and affects the structure of the cytoskeleton. At high concentrations, profilin prevents the polymerization of actin, whereas it enhances it at low concentrations. The chain is Profilin-4 from Olea europaea (Common olive).